A 475-amino-acid polypeptide reads, in one-letter code: Lipoprotein lipase (475 aa).

The N-terminal stretch at 1–27 is a signal peptide; sequence MESKALLLLALAVWLQSLTASRGGVAA. The tract at residues 32–53 is interaction with GPIHBP1; sequence RDFIDIESKFALRTPEDTAEDT. Cysteines 54 and 67 form a disulfide. Asn70 is a glycosylation site (N-linked (GlcNAc...) asparagine). Tyr121 carries the post-translational modification 3'-nitrotyrosine. The Nucleophile role is filled by Ser159. Asp183 functions as the Charge relay system in the catalytic mechanism. Tyr191 carries the 3'-nitrotyrosine modification. Residues Ala194, Arg197, Ser199, and Asp202 each contribute to the Ca(2+) site. Cys243 and Cys266 are disulfide-bonded. The interval 243–266 is essential for determining substrate specificity; the sequence is CNIGEAIRVIAERGLGDVDQLVKC. The active-site Charge relay system is the His268. Cystine bridges form between Cys291-Cys310 and Cys302-Cys305. A PLAT domain is found at 341–464; it reads FHYQVKIHFS…KGKAPAVFVK (124 aa). Tyr343 carries the post-translational modification 3'-nitrotyrosine. Asn386 is a glycosylation site (N-linked (GlcNAc...) asparagine). The segment at 417-421 is important for interaction with lipoprotein particles; it reads WSDWW. The important for heparin binding stretch occupies residues 430–434; the sequence is KIRVK. The tract at residues 443-467 is interaction with GPIHBP1; it reads IFCSREKVSHLQKGKAPAVFVKCHD. A disulfide bridge links Cys445 with Cys465.

It belongs to the AB hydrolase superfamily. Lipase family. As to quaternary structure, homodimer. Interacts with GPIHBP1 with 1:1 stoichiometry. Interacts with APOC2; the interaction activates LPL activity in the presence of lipids. Interaction with heparan sulfate proteoglycans is required to protect LPL against loss of activity. Associates with lipoprotein particles in blood plasma. Interacts with LMF1 and SEL1L; interaction with SEL1L is required to prevent aggregation of newly synthesized LPL in the endoplasmic reticulum (ER), and for normal export of LPL from the ER to the extracellular space. Interacts with SORL1; SORL1 acts as a sorting receptor, promoting LPL localization to endosomes and later to lysosomes, leading to degradation of newly synthesized LPL. In terms of processing, tyrosine nitration after lipopolysaccharide (LPS) challenge down-regulates the lipase activity. In terms of tissue distribution, highest levels in the spinal cord.

It is found in the cell membrane. The protein resides in the secreted. It localises to the extracellular space. The protein localises to the extracellular matrix. The enzyme catalyses a triacylglycerol + H2O = a diacylglycerol + a fatty acid + H(+). The catalysed reaction is a 1,2-diacyl-sn-glycero-3-phosphocholine + H2O = a 2-acyl-sn-glycero-3-phosphocholine + a fatty acid + H(+). It carries out the reaction 1,2,3-tri-(9Z-octadecenoyl)-glycerol + H2O = di-(9Z)-octadecenoylglycerol + (9Z)-octadecenoate + H(+). It catalyses the reaction 1,2-di-(9Z-octadecenoyl)-sn-glycero-3-phosphocholine + H2O = (9Z-octadecenoyl)-sn-glycero-3-phosphocholine + (9Z)-octadecenoate + H(+). The enzyme catalyses 1,2,3-tributanoylglycerol + H2O = dibutanoylglycerol + butanoate + H(+). The catalysed reaction is 1,2-dihexadecanoyl-sn-glycero-3-phosphocholine + H2O = hexadecanoyl-sn-glycero-3-phosphocholine + hexadecanoate + H(+). The apolipoprotein APOC2 acts as a coactivator of LPL activity. Ca(2+) binding promotes protein stability and formation of the active homodimer. Interaction with GPIHBP1 protects LPL against inactivation by ANGPTL4. Key enzyme in triglyceride metabolism. Catalyzes the hydrolysis of triglycerides from circulating chylomicrons and very low density lipoproteins (VLDL), and thereby plays an important role in lipid clearance from the blood stream, lipid utilization and storage. Although it has both phospholipase and triglyceride lipase activities it is primarily a triglyceride lipase with low but detectable phospholipase activity. Mediates margination of triglyceride-rich lipoprotein particles in capillaries. Recruited to its site of action on the luminal surface of vascular endothelium by binding to GPIHBP1 and cell surface heparan sulfate proteoglycans. This is Lipoprotein lipase (LPL) from Papio anubis (Olive baboon).